A 275-amino-acid polypeptide reads, in one-letter code: 3-deoxy-manno-octulosonate cytidylyltransferase (275 aa).

The protein belongs to the KdsB family.

The protein resides in the cytoplasm. It catalyses the reaction 3-deoxy-alpha-D-manno-oct-2-ulosonate + CTP = CMP-3-deoxy-beta-D-manno-octulosonate + diphosphate. The protein operates within nucleotide-sugar biosynthesis; CMP-3-deoxy-D-manno-octulosonate biosynthesis; CMP-3-deoxy-D-manno-octulosonate from 3-deoxy-D-manno-octulosonate and CTP: step 1/1. It participates in bacterial outer membrane biogenesis; lipopolysaccharide biosynthesis. In terms of biological role, activates KDO (a required 8-carbon sugar) for incorporation into bacterial lipopolysaccharide in Gram-negative bacteria. This is 3-deoxy-manno-octulosonate cytidylyltransferase from Psychrobacter sp. (strain PRwf-1).